The sequence spans 566 residues: Serine/threonine-protein kinase ppk14 (566 aa).

Basic and acidic residues predominate over residues 1-31 (MNELHDGESSEEGRINVEDHLEEAKKDDTGH). Disordered stretches follow at residues 1–39 (MNEL…GTAK) and 60–152 (SRKK…EKLK). A compositionally biased stretch (polar residues) spans 74–85 (AANQSPSGAPES). Residues 119 to 129 (SFFKSGRKKKD) are compositionally biased toward basic residues. Positions 134–145 (RNVSRSNGADTS) are enriched in polar residues. A Protein kinase domain is found at 195–485 (FEKVFLLGKG…AADVKLHPFF (291 aa)). ATP is bound by residues 201 to 209 (LGKGDVGRV) and K224. D320 functions as the Proton acceptor in the catalytic mechanism. T379 bears the Phosphothreonine mark. Residue S381 is modified to Phosphoserine. The residue at position 385 (T385) is a Phosphothreonine.

Belongs to the protein kinase superfamily. Ser/Thr protein kinase family. KIN82 subfamily.

It carries out the reaction L-seryl-[protein] + ATP = O-phospho-L-seryl-[protein] + ADP + H(+). The enzyme catalyses L-threonyl-[protein] + ATP = O-phospho-L-threonyl-[protein] + ADP + H(+). The polypeptide is Serine/threonine-protein kinase ppk14 (ppk14) (Schizosaccharomyces pombe (strain 972 / ATCC 24843) (Fission yeast)).